We begin with the raw amino-acid sequence, 456 residues long: Protein odr-4 homolog (456 aa).

The span at 374–401 (IESSKNNNNNNNNNNNNNNNNNNNNSKL) shows a compositional bias: low complexity. Positions 374–403 (IESSKNNNNNNNNNNNNNNNNNNNNSKLSN) are disordered. A helical membrane pass occupies residues 436–456 (YLIIIISVLVLMVAFYFKFFV).

It belongs to the ODR-4 family.

The protein resides in the membrane. In terms of biological role, may play a role in the trafficking of a subset of G-protein coupled receptors. This Dictyostelium discoideum (Social amoeba) protein is Protein odr-4 homolog.